The sequence spans 202 residues: DNA polymerase III subunit epsilon (202 aa).

Residues Asp-23 and Glu-25 each coordinate a divalent metal cation. Asp-23 and Glu-25 together coordinate substrate. His-162 (proton acceptor) is an active-site residue. Asp-167 provides a ligand contact to a divalent metal cation. Asp-167 contacts substrate.

DNA polymerase III contains a core (composed of alpha, epsilon and theta chains) that associates with a tau subunit. This core dimerizes to form the POLIII' complex. PolIII' associates with the gamma complex (composed of gamma, delta, delta', psi and chi chains) and with the beta chain to form the complete DNA polymerase III complex. The cofactor is Mg(2+). Mn(2+) is required as a cofactor.

It catalyses the reaction DNA(n) + a 2'-deoxyribonucleoside 5'-triphosphate = DNA(n+1) + diphosphate. Functionally, DNA polymerase III is a complex, multichain enzyme responsible for most of the replicative synthesis in bacteria. The epsilon subunit contain the editing function and is a proofreading 3'-5' exonuclease. The sequence is that of DNA polymerase III subunit epsilon (dnaQ) from Aquifex aeolicus (strain VF5).